A 254-amino-acid polypeptide reads, in one-letter code: Peroxisomal membrane protein 11 homolog (254 aa).

At 1 to 91 (MAGILSKPNY…ILALFKVKNP (91 aa)) the chain is on the cytoplasmic side. A helical transmembrane segment spans residues 92–112 (FAFLNILALIRQSGMYFYWVF). Residues 113-227 (DHLILGTNIG…DLIIASTLLK (115 aa)) are Lumenal-facing. The chain crosses the membrane as a helical span at residues 228–248 (IYPFSQGTIGISGIISALIGA). The Cytoplasmic portion of the chain corresponds to 249-254 (YQMWPK).

This sequence belongs to the peroxin-11 family.

The protein resides in the peroxisome membrane. Functionally, involved in peroxisomal proliferation. Could participate in peroxisomal elongation or fission. May be involved in parceling of peroxisomes into regular quanta. This Dictyostelium discoideum (Social amoeba) protein is Peroxisomal membrane protein 11 homolog (pex11).